The primary structure comprises 973 residues: Coatomer subunit beta (973 aa).

HEAT repeat units lie at residues His98–Glu133 and Leu134–His170. A Phosphoserine modification is found at Ser181. HEAT repeat units lie at residues Asn279–Gly317 and Ala318–Ala354. A Phosphoserine modification is found at Ser540.

Oligomeric complex that consists of at least the alpha, beta, beta', gamma, delta, epsilon and zeta subunits. The complex interacts with ARF1 and PAB1. Post-translationally, the N-terminus is blocked.

The protein resides in the cytoplasm. The protein localises to the golgi apparatus membrane. Its subcellular location is the cytoplasmic vesicle. It localises to the COPI-coated vesicle membrane. Its function is as follows. The coatomer is a cytosolic protein complex that binds to dilysine motifs and reversibly associates with Golgi non-clathrin-coated vesicles, which further mediate biosynthetic protein transport from the ER, via the Golgi up to the trans Golgi network. Coatomer complex is required for budding from Golgi membranes, and is essential for the retrograde Golgi-to-ER transport of dilysine-tagged proteins. Required for mitochondrial morphology. In Saccharomyces cerevisiae (strain ATCC 204508 / S288c) (Baker's yeast), this protein is Coatomer subunit beta (SEC26).